The chain runs to 279 residues: Acetyl-coenzyme A carboxylase carboxyl transferase subunit beta (279 aa).

The 257-residue stretch at 23-279 (LWWKCEECGA…LTTLLSLMKL (257 aa)) folds into the CoA carboxyltransferase N-terminal domain. The Zn(2+) site is built by Cys-27, Cys-30, Cys-46, and Cys-49. The C4-type zinc-finger motif lies at 27-49 (CEECGAALHKKQMEASDHTCPQC).

It belongs to the AccD/PCCB family. As to quaternary structure, acetyl-CoA carboxylase is a heterohexamer composed of biotin carboxyl carrier protein (AccB), biotin carboxylase (AccC) and two subunits each of ACCase subunit alpha (AccA) and ACCase subunit beta (AccD). Zn(2+) serves as cofactor.

The protein resides in the cytoplasm. The enzyme catalyses N(6)-carboxybiotinyl-L-lysyl-[protein] + acetyl-CoA = N(6)-biotinyl-L-lysyl-[protein] + malonyl-CoA. The protein operates within lipid metabolism; malonyl-CoA biosynthesis; malonyl-CoA from acetyl-CoA: step 1/1. Component of the acetyl coenzyme A carboxylase (ACC) complex. Biotin carboxylase (BC) catalyzes the carboxylation of biotin on its carrier protein (BCCP) and then the CO(2) group is transferred by the transcarboxylase to acetyl-CoA to form malonyl-CoA. This Chlorobium chlorochromatii (strain CaD3) protein is Acetyl-coenzyme A carboxylase carboxyl transferase subunit beta.